Reading from the N-terminus, the 2259-residue chain is Golgin subfamily A member 4 (2259 aa).

Residues 1 to 54 (MFKKLKQKISEEQQQLQQALAPAQASSSSSTPTRTRSRTSSFTDQLDDATPNRE) are disordered. Phosphoserine is present on S10. The span at 12–41 (EQQQLQQALAPAQASSSSSTPTRTRSRTSS) shows a compositional bias: low complexity. T39 bears the Phosphothreonine mark. S41, S104, and S111 each carry phosphoserine. The tract at residues 165 to 235 (SLSREQLLQR…EELQMDQQAK (71 aa)) is interaction with MACF1. Residues 167–2182 (SREQLLQRLR…SYEKSVCAAA (2016 aa)) adopt a coiled-coil conformation. Composition is skewed to basic and acidic residues over residues 1932-1946 (LEDR…HVIE) and 1954-1977 (DGRH…LSKE). Residues 1932 to 1977 (LEDRPEENSKSHVIESKLGTPMDGRHSDLESKLAGSEREKQKLSKE) are disordered. The GRIP domain maps to 2199-2246 (LFGEPTEFEYLRKVLFEYMMGRETKTMAKVITTVLRFPDDQAQKILER).

As to quaternary structure, homodimer. Interacts with GTP-bound ARL1 and ARL3. Interacts with MACF1. Directly interacts with TBC1D23. Interacts with FAM91A1; this interaction may be mediated by TBC1D23. In terms of tissue distribution, expressed in the head of epididymal sperm but not in testicular sperm (at protein level).

The protein resides in the cytoplasm. Its subcellular location is the golgi apparatus membrane. It localises to the golgi apparatus. The protein localises to the trans-Golgi network membrane. Its function is as follows. Involved in vesicular trafficking at the Golgi apparatus level. May play a role in delivery of transport vesicles containing GPI-linked proteins from the trans-Golgi network through its interaction with MACF1. Involved in endosome-to-Golgi trafficking. In Rattus norvegicus (Rat), this protein is Golgin subfamily A member 4.